A 336-amino-acid chain; its full sequence is tRNA-splicing endonuclease (336 aa).

Catalysis depends on residues tyrosine 271, histidine 282, and lysine 313.

This sequence belongs to the tRNA-intron endonuclease family. Archaeal long subfamily. As to quaternary structure, homodimer.

The enzyme catalyses pretRNA = a 3'-half-tRNA molecule with a 5'-OH end + a 5'-half-tRNA molecule with a 2',3'-cyclic phosphate end + an intron with a 2',3'-cyclic phosphate and a 5'-hydroxyl terminus.. Endonuclease that removes tRNA introns. Cleaves pre-tRNA at the 5'- and 3'-splice sites to release the intron. The products are an intron and two tRNA half-molecules bearing 2',3' cyclic phosphate and 5'-OH termini. Recognizes a pseudosymmetric substrate in which 2 bulged loops of 3 bases are separated by a stem of 4 bp. This chain is tRNA-splicing endonuclease, found in Natronomonas pharaonis (strain ATCC 35678 / DSM 2160 / CIP 103997 / JCM 8858 / NBRC 14720 / NCIMB 2260 / Gabara) (Halobacterium pharaonis).